Consider the following 95-residue polypeptide: MSLSLDDVKRVANLARIEISEDEARKALIQLSGIFGLIEQMQAVDVSAITPMSHAQDVMQRLRADGATEIDQRELFQSVAPQVEAGLYLVPKVIE.

Belongs to the GatC family. Heterotrimer of A, B and C subunits.

The catalysed reaction is L-glutamyl-tRNA(Gln) + L-glutamine + ATP + H2O = L-glutaminyl-tRNA(Gln) + L-glutamate + ADP + phosphate + H(+). It carries out the reaction L-aspartyl-tRNA(Asn) + L-glutamine + ATP + H2O = L-asparaginyl-tRNA(Asn) + L-glutamate + ADP + phosphate + 2 H(+). Its function is as follows. Allows the formation of correctly charged Asn-tRNA(Asn) or Gln-tRNA(Gln) through the transamidation of misacylated Asp-tRNA(Asn) or Glu-tRNA(Gln) in organisms which lack either or both of asparaginyl-tRNA or glutaminyl-tRNA synthetases. The reaction takes place in the presence of glutamine and ATP through an activated phospho-Asp-tRNA(Asn) or phospho-Glu-tRNA(Gln). This Nitrosospira multiformis (strain ATCC 25196 / NCIMB 11849 / C 71) protein is Aspartyl/glutamyl-tRNA(Asn/Gln) amidotransferase subunit C.